The chain runs to 150 residues: Large ribosomal subunit protein uL13 (150 aa).

The protein belongs to the universal ribosomal protein uL13 family. As to quaternary structure, part of the 50S ribosomal subunit.

This protein is one of the early assembly proteins of the 50S ribosomal subunit, although it is not seen to bind rRNA by itself. It is important during the early stages of 50S assembly. The chain is Large ribosomal subunit protein uL13 from Persephonella marina (strain DSM 14350 / EX-H1).